Consider the following 469-residue polypeptide: Argininosuccinate lyase (469 aa).

Belongs to the lyase 1 family. Argininosuccinate lyase subfamily.

Its subcellular location is the cytoplasm. The catalysed reaction is 2-(N(omega)-L-arginino)succinate = fumarate + L-arginine. The protein operates within amino-acid biosynthesis; L-arginine biosynthesis; L-arginine from L-ornithine and carbamoyl phosphate: step 3/3. This is Argininosuccinate lyase from Saccharophagus degradans (strain 2-40 / ATCC 43961 / DSM 17024).